A 150-amino-acid polypeptide reads, in one-letter code: Large ribosomal subunit protein bL9 (150 aa).

This sequence belongs to the bacterial ribosomal protein bL9 family.

Binds to the 23S rRNA. In Herminiimonas arsenicoxydans, this protein is Large ribosomal subunit protein bL9.